The sequence spans 357 residues: Putative diaminopimelate epimerase, chloroplastic (357 aa).

The N-terminal 47 residues, 1–47 (MSSATAAATATIAAAAAAAAKLAATPAPAPSRRRLTLRGNPTARRCV), are a transit peptide targeting the chloroplast. Catalysis depends on residues Cys145 and Cys300.

Belongs to the diaminopimelate epimerase family.

The protein resides in the plastid. It is found in the chloroplast. The catalysed reaction is (2S,6S)-2,6-diaminopimelate = meso-2,6-diaminopimelate. It participates in amino-acid biosynthesis; L-lysine biosynthesis via DAP pathway; DL-2,6-diaminopimelate from LL-2,6-diaminopimelate: step 1/1. This Oryza sativa subsp. indica (Rice) protein is Putative diaminopimelate epimerase, chloroplastic (DAPF).